The following is a 330-amino-acid chain: MSHIIKIFPSNIEFSGREDESILDAALSAGIHLEHSCKAGDCGICESDLLAGEVVDSKGNIFGQGDKILTCCCKPKTALELNAHFFPELAGQTKKIVPCKVNSAVLVSGDVMTLKLRTPPTAKIGFLPGQYINLHYKGVTRSYSIANSDESNGIELHVRNVPNGQMSSLIFGELQENTLMRIEGPCGTFFIRESDRPIIFLAGGTGFAPVKSMVEHLIQGKCRREIYIYWGMQYSKDFYSALPQQWSEQHDNVHYIPVVSGDDAEWGGRKGFVHHAVMDDFDSLEFFDIYACGSPVMIDASKKDFMMKNLSVEHFYSDAFTASNNIEDNL.

The 2Fe-2S ferredoxin-type domain maps to 3 to 89 (HIIKIFPSNI…ELNAHFFPEL (87 aa)). Positions 37, 42, and 45 each coordinate [2Fe-2S] cluster. An FAD-binding FR-type domain is found at 94-192 (KKIVPCKVNS…EGPCGTFFIR (99 aa)).

The cofactor is [2Fe-2S] cluster.

The protein operates within bacterial outer membrane biogenesis; LPS O-antigen biosynthesis. In Salmonella typhimurium (strain LT2 / SGSC1412 / ATCC 700720), this protein is Protein RfbI (rfbI).